Here is a 270-residue protein sequence, read N- to C-terminus: 4-hydroxy-tetrahydrodipicolinate reductase (270 aa).

Residues 11-16 (GASGRM) and E37 each bind NAD(+). R38 serves as a coordination point for NADP(+). NAD(+)-binding positions include 101 to 103 (GTT) and 125 to 128 (APNM). The Proton donor/acceptor role is filled by H158. H159 contacts (S)-2,3,4,5-tetrahydrodipicolinate. Residue K162 is the Proton donor of the active site. (S)-2,3,4,5-tetrahydrodipicolinate is bound at residue 168–169 (GT).

It belongs to the DapB family.

The protein resides in the cytoplasm. The catalysed reaction is (S)-2,3,4,5-tetrahydrodipicolinate + NAD(+) + H2O = (2S,4S)-4-hydroxy-2,3,4,5-tetrahydrodipicolinate + NADH + H(+). It carries out the reaction (S)-2,3,4,5-tetrahydrodipicolinate + NADP(+) + H2O = (2S,4S)-4-hydroxy-2,3,4,5-tetrahydrodipicolinate + NADPH + H(+). The protein operates within amino-acid biosynthesis; L-lysine biosynthesis via DAP pathway; (S)-tetrahydrodipicolinate from L-aspartate: step 4/4. Catalyzes the conversion of 4-hydroxy-tetrahydrodipicolinate (HTPA) to tetrahydrodipicolinate. The chain is 4-hydroxy-tetrahydrodipicolinate reductase from Shewanella frigidimarina (strain NCIMB 400).